Reading from the N-terminus, the 660-residue chain is U-box domain-containing protein 13 (660 aa).

Residues 227-252 (DDNGEEQKVGVNSRSNGQTSTAASQK) form a disordered region. Over residues 236 to 250 (GVNSRSNGQTSTAAS) the composition is skewed to polar residues. One can recognise a U-box domain in the interval 255 to 329 (VIPDDFRCPI…AQWCEANDIE (75 aa)). ARM repeat units follow at residues 384–423 (ADNR…NLSI), 425–464 (ENNK…SLSV), 466–505 (DENK…NLCI), 507–546 (QGNK…ILSS), and 548–587 (PEGK…HLCS). Residues 631 to 660 (AEQQKETAVSQPEEEAEPTHPESTTEAADT) form a disordered region. Polar residues predominate over residues 651 to 660 (PESTTEAADT).

Binds to SD11, SD16, SD17, SD18, SD113, SD129 and SD25. Phosphorylated by SD1-6 and SD1-7.

Its subcellular location is the nucleus. The protein resides in the cytoplasm. The enzyme catalyses S-ubiquitinyl-[E2 ubiquitin-conjugating enzyme]-L-cysteine + [acceptor protein]-L-lysine = [E2 ubiquitin-conjugating enzyme]-L-cysteine + N(6)-ubiquitinyl-[acceptor protein]-L-lysine.. It participates in protein modification; protein ubiquitination. In terms of biological role, functions as an E3 ubiquitin ligase. This chain is U-box domain-containing protein 13 (PUB13), found in Arabidopsis thaliana (Mouse-ear cress).